The chain runs to 30 residues: Cysteine-rich venom protein okinavin (30 aa).

The tract at residues 1–30 (SVDFDSESPRKPXIQNEIVDLHNPLRRXVN) is disordered.

Belongs to the CRISP family. Contains 8 disulfide bonds. In terms of tissue distribution, expressed by the venom gland.

It localises to the secreted. Its function is as follows. Inhibits calcium-activated potassium channels (KCa), voltage-gated potassium channel (Kv), and the calcium release channel/ryanodine receptor (RyR). The chain is Cysteine-rich venom protein okinavin from Ovophis okinavensis (Ryukyu Island pit viper).